A 761-amino-acid polypeptide reads, in one-letter code: Xaa-Pro dipeptidyl-peptidase (761 aa).

Catalysis depends on charge relay system residues Ser-347, Asp-467, and His-497.

It belongs to the peptidase S15 family. In terms of assembly, homodimer.

Its subcellular location is the cytoplasm. It catalyses the reaction Hydrolyzes Xaa-Pro-|- bonds to release unblocked, N-terminal dipeptides from substrates including Ala-Pro-|-p-nitroanilide and (sequentially) Tyr-Pro-|-Phe-Pro-|-Gly-Pro-|-Ile.. Functionally, removes N-terminal dipeptides sequentially from polypeptides having unsubstituted N-termini provided that the penultimate residue is proline. This Streptococcus agalactiae serotype III (strain NEM316) protein is Xaa-Pro dipeptidyl-peptidase.